A 110-amino-acid polypeptide reads, in one-letter code: UPF0060 membrane protein Pnap_4944 (110 aa).

Transmembrane regions (helical) follow at residues 8 to 28, 33 to 53, 65 to 85, and 88 to 108; these read ILFAVTALAEIVGCYLPWLVL, SLLLLVPAAMSLGLFAWLLTL, YGGMYIAVALGWLRFVDGIAL, and WDLSGAAIALVGMAVIVMQPS.

Belongs to the UPF0060 family.

It localises to the cell inner membrane. The chain is UPF0060 membrane protein Pnap_4944 from Polaromonas naphthalenivorans (strain CJ2).